Reading from the N-terminus, the 669-residue chain is DNA ligase (669 aa).

NAD(+)-binding positions include 32-36, 81-82, and Glu-113; these read DAEYD and SL. The active-site N6-AMP-lysine intermediate is the Lys-115. Positions 136, 173, 290, and 314 each coordinate NAD(+). 4 residues coordinate Zn(2+): Cys-408, Cys-411, Cys-426, and Cys-432. One can recognise a BRCT domain in the interval 592–669; sequence AVDSALAGKI…DEQALIEFLK (78 aa).

This sequence belongs to the NAD-dependent DNA ligase family. LigA subfamily. Requires Mg(2+) as cofactor. Mn(2+) serves as cofactor.

The enzyme catalyses NAD(+) + (deoxyribonucleotide)n-3'-hydroxyl + 5'-phospho-(deoxyribonucleotide)m = (deoxyribonucleotide)n+m + AMP + beta-nicotinamide D-nucleotide.. In terms of biological role, DNA ligase that catalyzes the formation of phosphodiester linkages between 5'-phosphoryl and 3'-hydroxyl groups in double-stranded DNA using NAD as a coenzyme and as the energy source for the reaction. It is essential for DNA replication and repair of damaged DNA. The sequence is that of DNA ligase from Vibrio cholerae serotype O1 (strain ATCC 39541 / Classical Ogawa 395 / O395).